We begin with the raw amino-acid sequence, 102 residues long: MYTKEKINELMEKAQVMKKEMEKIQKDIKMTKIKGESGAGLVTIFMNGNYNCRKTKINDEIWNEKNKILIQDLITSAINNAVNKITELQKKKIILKTPFHNE.

Belongs to the YbaB/EbfC family. Homodimer.

The protein resides in the cytoplasm. Its subcellular location is the nucleoid. Binds to DNA and alters its conformation. May be involved in regulation of gene expression, nucleoid organization and DNA protection. The protein is Nucleoid-associated protein BCc_301 of Buchnera aphidicola subsp. Cinara cedri (strain Cc).